Consider the following 506-residue polypeptide: Galactose/methyl galactoside import ATP-binding protein MglA (506 aa).

ABC transporter domains are found at residues 14–249 (LEMS…VGRS) and 264–506 (VILE…SLHL). 46-53 (GENGAGKS) lines the ATP pocket.

It belongs to the ABC transporter superfamily. Galactose/methyl galactoside importer (TC 3.A.1.2.3) family. As to quaternary structure, the complex is composed of one ATP-binding protein (MglA), two transmembrane proteins (MglC) and a solute-binding protein (MglB).

It localises to the cell inner membrane. The catalysed reaction is D-galactose(out) + ATP + H2O = D-galactose(in) + ADP + phosphate + H(+). It carries out the reaction methyl beta-D-galactoside(out) + ATP + H2O = methyl beta-D-galactoside(in) + ADP + phosphate + H(+). Functionally, part of the ABC transporter complex MglABC involved in galactose/methyl galactoside import. Responsible for energy coupling to the transport system. In Escherichia coli O6:K15:H31 (strain 536 / UPEC), this protein is Galactose/methyl galactoside import ATP-binding protein MglA.